A 131-amino-acid chain; its full sequence is uncharacterized protein (131 aa).

This is an uncharacterized protein from Haemophilus influenzae (strain ATCC 51907 / DSM 11121 / KW20 / Rd).